We begin with the raw amino-acid sequence, 122 residues long: MIQTESTLRVADNTGAREIQCIKVIGAGQKQYANVGDVIVGTIKEATPGGVVKRGQVVRAVIVRTKRGIKRPDGSYIRFDENACVIIDENKDPRGTRIFGPVTRELREKKYMKIISLAPEVL.

It belongs to the universal ribosomal protein uL14 family. In terms of assembly, part of the 50S ribosomal subunit. Forms a cluster with proteins L3 and L19. In the 70S ribosome, L14 and L19 interact and together make contacts with the 16S rRNA in bridges B5 and B8.

In terms of biological role, binds to 23S rRNA. Forms part of two intersubunit bridges in the 70S ribosome. The protein is Large ribosomal subunit protein uL14 of Natranaerobius thermophilus (strain ATCC BAA-1301 / DSM 18059 / JW/NM-WN-LF).